The following is a 509-amino-acid chain: uncharacterized protein (509 aa).

A signal peptide spans 1 to 32 (MMLPKRNIIHFLRKRAIFIVAAFIALLTVDYS).

The protein resides in the endoplasmic reticulum. This is an uncharacterized protein from Schizosaccharomyces pombe (strain 972 / ATCC 24843) (Fission yeast).